The following is a 276-amino-acid chain: Diaminopimelate epimerase (276 aa).

N13, Q46, and N66 together coordinate substrate. C75 functions as the Proton donor in the catalytic mechanism. Residues 76–77, N159, N192, and 210–211 contribute to the substrate site; these read GN and ER. Residue C219 is the Proton acceptor of the active site. Substrate is bound at residue 220 to 221; that stretch reads GT.

It belongs to the diaminopimelate epimerase family. As to quaternary structure, homodimer.

Its subcellular location is the cytoplasm. The enzyme catalyses (2S,6S)-2,6-diaminopimelate = meso-2,6-diaminopimelate. Its pathway is amino-acid biosynthesis; L-lysine biosynthesis via DAP pathway; DL-2,6-diaminopimelate from LL-2,6-diaminopimelate: step 1/1. In terms of biological role, catalyzes the stereoinversion of LL-2,6-diaminopimelate (L,L-DAP) to meso-diaminopimelate (meso-DAP), a precursor of L-lysine and an essential component of the bacterial peptidoglycan. The protein is Diaminopimelate epimerase of Tolumonas auensis (strain DSM 9187 / NBRC 110442 / TA 4).